The chain runs to 271 residues: Calretinin (271 aa).

EF-hand domains lie at 16 to 51, 63 to 98, 107 to 142, 151 to 186, 195 to 230, and 235 to 270; these read LTAS…LEKA, NFGE…EENF, GSSA…LLKK, KLQE…QENF, LTSE…LYEK, and MNIQ…SEPP. Ca(2+) is bound by residues Asp-29, Asp-31, Asn-33, Tyr-35, Glu-40, Asp-76, Asn-78, Asp-80, Lys-82, Glu-87, Asp-120, Asp-122, Ser-124, Tyr-126, Glu-131, Asp-164, Asn-166, Asp-168, Lys-170, Glu-175, Asp-208, Asp-210, Ser-212, Tyr-214, and Glu-219. Tyr-214 is modified (phosphotyrosine).

It belongs to the calbindin family. Brain.

It is found in the synapse. The protein localises to the cell projection. The protein resides in the dendrite. Functionally, calcium-binding protein involved in calcium homeostasis and signal transduction. It plays a critical role in buffering intracellular calcium levels and modulating calcium-dependent signaling pathways. Predominantly expressed in specific neuronal populations, influences synaptic plasticity and neuronal excitability, contributing to learning and memory. During embryonic development, it facilitates neuronal differentiation and maturation. This is Calretinin from Homo sapiens (Human).